Consider the following 82-residue polypeptide: Small ribosomal subunit protein uS17 (82 aa).

It belongs to the universal ribosomal protein uS17 family. As to quaternary structure, part of the 30S ribosomal subunit.

One of the primary rRNA binding proteins, it binds specifically to the 5'-end of 16S ribosomal RNA. This chain is Small ribosomal subunit protein uS17, found in Azorhizobium caulinodans (strain ATCC 43989 / DSM 5975 / JCM 20966 / LMG 6465 / NBRC 14845 / NCIMB 13405 / ORS 571).